Consider the following 620-residue polypeptide: 1-deoxy-D-xylulose-5-phosphate synthase (620 aa).

Thiamine diphosphate-binding positions include H80 and 121–123 (GHS). D152 is a Mg(2+) binding site. Residues 153-154 (GA), N181, Y288, and E370 each bind thiamine diphosphate. N181 serves as a coordination point for Mg(2+).

It belongs to the transketolase family. DXPS subfamily. As to quaternary structure, homodimer. Mg(2+) is required as a cofactor. Requires thiamine diphosphate as cofactor.

The catalysed reaction is D-glyceraldehyde 3-phosphate + pyruvate + H(+) = 1-deoxy-D-xylulose 5-phosphate + CO2. The protein operates within metabolic intermediate biosynthesis; 1-deoxy-D-xylulose 5-phosphate biosynthesis; 1-deoxy-D-xylulose 5-phosphate from D-glyceraldehyde 3-phosphate and pyruvate: step 1/1. Catalyzes the acyloin condensation reaction between C atoms 2 and 3 of pyruvate and glyceraldehyde 3-phosphate to yield 1-deoxy-D-xylulose-5-phosphate (DXP). This chain is 1-deoxy-D-xylulose-5-phosphate synthase, found in Sodalis glossinidius (strain morsitans).